The chain runs to 206 residues: RNA-binding protein with multiple splicing 2 (206 aa).

The residue at position 2 (serine 2) is an N-acetylserine. Positions 25 to 102 (RTLFVSGLPV…QTLRLEFAKA (78 aa)) constitute an RRM domain. The segment at 35 to 45 (DIKPRELYLLF) is important for homodimerization.

As to quaternary structure, homodimer. Interacts with EEF2.

The protein resides in the cytoplasm. Its subcellular location is the nucleus. The protein localises to the stress granule. Functionally, RNA-binding protein involved in the regulation of smooth muscle cell differentiation and proliferation in the gastrointestinal system. Binds NOG mRNA, the major inhibitor of the bone morphogenetic protein (BMP) pathway. Mediates an increase of NOG mRNA levels, thereby contributing to the negative regulation of BMP signaling pathway and promoting reversible dedifferentiation and proliferation of smooth muscle cells. Acts as a pre-mRNA alternative splicing regulator. Mediates ACTN1 and FLNB alternative splicing. Likely binds to mRNA tandem CAC trinucleotide or CA dinucleotide motifs. The chain is RNA-binding protein with multiple splicing 2 (Rbpms2) from Mus musculus (Mouse).